The following is a 115-amino-acid chain: MARVKRGNVARKRRNKILRLARGFRGGNGTLFRTANQRVMKALCNAYRDRRRRKRDFRRLWIARINAAARLNGLSYSKFMGGLKKADIRINRKMLAQLAVIDPKTFTNVAVNSKS.

The protein belongs to the bacterial ribosomal protein bL20 family.

In terms of biological role, binds directly to 23S ribosomal RNA and is necessary for the in vitro assembly process of the 50S ribosomal subunit. It is not involved in the protein synthesizing functions of that subunit. The chain is Large ribosomal subunit protein bL20 from Prochlorococcus marinus (strain NATL2A).